The chain runs to 399 residues: S-adenosylmethionine synthase (399 aa).

His-17 lines the ATP pocket. Asp-19 lines the Mg(2+) pocket. Position 45 (Glu-45) interacts with K(+). L-methionine contacts are provided by Glu-58 and Gln-101. The tract at residues 101-111 (QSADIAMGVDQ) is flexible loop. ATP contacts are provided by residues 177–179 (DGK), 244–245 (RF), Asp-253, 259–260 (RK), Ala-276, and Lys-280. L-methionine is bound at residue Asp-253. An L-methionine-binding site is contributed by Lys-284.

Belongs to the AdoMet synthase family. As to quaternary structure, homotetramer; dimer of dimers. Requires Mg(2+) as cofactor. K(+) serves as cofactor.

The protein localises to the cytoplasm. The enzyme catalyses L-methionine + ATP + H2O = S-adenosyl-L-methionine + phosphate + diphosphate. The protein operates within amino-acid biosynthesis; S-adenosyl-L-methionine biosynthesis; S-adenosyl-L-methionine from L-methionine: step 1/1. Catalyzes the formation of S-adenosylmethionine (AdoMet) from methionine and ATP. The overall synthetic reaction is composed of two sequential steps, AdoMet formation and the subsequent tripolyphosphate hydrolysis which occurs prior to release of AdoMet from the enzyme. This is S-adenosylmethionine synthase from Bacillus thuringiensis (strain Al Hakam).